The sequence spans 205 residues: Ribosomal RNA small subunit methyltransferase G (205 aa).

S-adenosyl-L-methionine is bound by residues Gly-76, Leu-81, 127 to 128 (IE), and Arg-140.

This sequence belongs to the methyltransferase superfamily. RNA methyltransferase RsmG family.

The protein localises to the cytoplasm. The enzyme catalyses guanosine(527) in 16S rRNA + S-adenosyl-L-methionine = N(7)-methylguanosine(527) in 16S rRNA + S-adenosyl-L-homocysteine. Its function is as follows. Specifically methylates the N7 position of guanine in position 527 of 16S rRNA. The protein is Ribosomal RNA small subunit methyltransferase G of Francisella tularensis subsp. tularensis (strain WY96-3418).